The chain runs to 706 residues: Forkhead box protein P2 (706 aa).

Over residues 1–28 (MMQESATETISNSSMNQNGMSTLSSQLD) the composition is skewed to polar residues. Disordered stretches follow at residues 1–45 (MMQE…SEVS) and 275–305 (IKHG…ITHH). The segment covering 287-296 (SSSTTSTTTS) has biased composition (low complexity). The C2H2-type zinc finger occupies 337-362 (GVCKWPGCENICEDFGQFLKHLNNEH). Residues 379 to 400 (VQQLEIQLSKERERLQAMMTHL) form a leucine-zipper region. Positions 413–417 (PLNLV) are ctbp1-binding. A DNA-binding region (fork-head) is located at residues 495-585 (RPPFTYATLI…SQKITASPTL (91 aa)). The segment at 672–706 (DDEDCPMSLVTTANHSPELEEDRELEEEPLSEDLE) is disordered. Residues 690–706 (LEEDRELEEEPLSEDLE) show a composition bias toward acidic residues.

In terms of assembly, dimerization is required for DNA-binding. As to expression, at stage 15, expressed in the anterior/superior eye field and the caudal branchial arch. At later stages, expression persists in the retina and in the caudal branchial arch. Expressed in the pronephros and the tip of the tail. Beginning with stage 35, expression in the brain is localized to distinct subdomains of the anterior prosencephalon, the medial mesencephalon and to lateral domains of the hindbrain.

The protein resides in the nucleus. Transcriptional repressor. The sequence is that of Forkhead box protein P2 from Xenopus laevis (African clawed frog).